Consider the following 279-residue polypeptide: MNIENKEITSSWFTNLRDLLCKEFEKIEEEYAQTKGLKPAKFVRSSWQRNGGGGGVMSLMKGAVFEKVGVNISTVFGKISPEFRNEIPGVELDGKFFATGISLVAHLKSPLIPAMHFNTRYIETSKSWFGGGGDLTPFYPEKNETVKFHAAFKEACDKYDSSYYPKFKKQCDEYFYLKHRKEPRGVGGIFYDYLNNGNFEQDFAFTQDVGKALLSVYPEIVRSKLFLPWTAEQKEYQLIRRGRYVEFNLLYDRGTKFGLMTDGNVEAILMSLPPEVKFN.

Residue serine 102 coordinates substrate. Histidine 106 and histidine 116 together coordinate a divalent metal cation. The active-site Proton donor is the histidine 116. 118–120 (NTR) serves as a coordination point for substrate. The a divalent metal cation site is built by histidine 149 and histidine 179. The important for dimerization stretch occupies residues 244–279 (YVEFNLLYDRGTKFGLMTDGNVEAILMSLPPEVKFN).

The protein belongs to the aerobic coproporphyrinogen-III oxidase family. In terms of assembly, homodimer. Requires a divalent metal cation as cofactor.

Its subcellular location is the cytoplasm. The enzyme catalyses coproporphyrinogen III + O2 + 2 H(+) = protoporphyrinogen IX + 2 CO2 + 2 H2O. It functions in the pathway porphyrin-containing compound metabolism; protoporphyrin-IX biosynthesis; protoporphyrinogen-IX from coproporphyrinogen-III (O2 route): step 1/1. Involved in the heme biosynthesis. Catalyzes the aerobic oxidative decarboxylation of propionate groups of rings A and B of coproporphyrinogen-III to yield the vinyl groups in protoporphyrinogen-IX. The polypeptide is Oxygen-dependent coproporphyrinogen-III oxidase (Rickettsia peacockii (strain Rustic)).